Reading from the N-terminus, the 597-residue chain is Spastin (597 aa).

At 1–20 (MPNNDILRPLAIPAKYVGSF) the chain is on the cytoplasmic side. Residues 21–37 (LVFLYNGLYFVFVVNLW) constitute an intramembrane region (helical). The Cytoplasmic portion of the chain corresponds to 38–597 (SRLFGKATKT…DWNRLYGSNA (560 aa)). Residues 56–80 (RKLGKDMASRAPPRRGQSSEDNEDG) are disordered. In terms of domain architecture, MIT spans 91–168 (HHKQAYAYIA…ENTRERMDEL (78 aa)). A disordered region spans residues 193 to 289 (SARKTSSEPS…PAMMAKQSCV (97 aa)). Residues 214–231 (SYKQSKSYKNSTTVTTKR) are compositionally biased toward polar residues. The span at 232 to 252 (SQASPSFSSSSSSVNSTAGSS) shows a compositional bias: low complexity.

It belongs to the AAA ATPase family. Spastin subfamily. Homohexamer. The homohexamer is stabilized by ATP-binding. The homohexamer may adopt a ring conformation through which microtubules pass prior to being severed. Interacts with microtubules.

It localises to the membrane. The protein resides in the cytoplasm. The protein localises to the cytoskeleton. It is found in the microtubule organizing center. Its subcellular location is the centrosome. It carries out the reaction n ATP + n H2O + a microtubule = n ADP + n phosphate + (n+1) alpha/beta tubulin heterodimers.. In terms of biological role, ATP-dependent microtubule severing protein. Microtubule severing may promote reorganization of cellular microtubule arrays and the release of microtubules from the microtubule organizing center following nucleation. The chain is Spastin from Nematostella vectensis (Starlet sea anemone).